Consider the following 215-residue polypeptide: Cytochrome b6 (215 aa).

A helical membrane pass occupies residues 32-52 (IFYCLGGITLTCFLVQVATGF). Cys-35 provides a ligand contact to heme c. Residues His-86 and His-100 each coordinate heme b. Transmembrane regions (helical) follow at residues 90-110 (ASMMVLMMILHVFRVYLTGGF), 116-136 (LTWVTGVVLGVLTASFGVTGY), and 186-206 (LHTFVLPLLTAVFMLMHFPMI). His-187 and His-202 together coordinate heme b.

It belongs to the cytochrome b family. PetB subfamily. The 4 large subunits of the cytochrome b6-f complex are cytochrome b6, subunit IV (17 kDa polypeptide, PetD), cytochrome f and the Rieske protein, while the 4 small subunits are PetG, PetL, PetM and PetN. The complex functions as a dimer. It depends on heme b as a cofactor. Heme c serves as cofactor.

Its subcellular location is the plastid. The protein localises to the chloroplast thylakoid membrane. Component of the cytochrome b6-f complex, which mediates electron transfer between photosystem II (PSII) and photosystem I (PSI), cyclic electron flow around PSI, and state transitions. The protein is Cytochrome b6 of Populus alba (White poplar).